The chain runs to 863 residues: Autotaxin (863 aa).

The first 27 residues, 1 to 27 (MARRSSFQSCQIISLFTFAVGVNICLG), serve as a signal peptide directing secretion. A propeptide spans 28 to 35 (FTAHRIKR) (removed by furin). Asn54 is a glycosylation site (N-linked (GlcNAc...) asparagine). 2 SMB domains span residues 55–98 (ISGS…LKTA) and 99–143 (RGWE…GESH). Cystine bridges form between Cys59/Cys76, Cys63/Cys94, Cys74/Cys87, Cys80/Cys86, Cys103/Cys120, Cys108/Cys138, Cys118/Cys131, Cys124/Cys130, Cys149/Cys195, and Cys157/Cys351. Positions 127–129 (RGD) match the Cell attachment site motif. The segment at 145–502 (VDDDCEEIKA…STFKYKTKVP (358 aa)) is phosphodiesterase. The Zn(2+) site is built by Asp172 and Thr210. The active-site Nucleophile is Thr210. Residues Thr210, Asn231, and Asp312 each contribute to the 1-(9Z-octadecenoyl)-sn-glycero-3-phosphate site. 3 residues coordinate 1-hexadecanoyl-sn-glycero-3-phosphate: Thr210, Asn231, and Asp312. 1-tetradecanoyl-sn-glycerol 3-phosphate is bound by residues Thr210, Asn231, and Asp312. Residues Asp312, His316, Asp359, and His360 each coordinate Zn(2+). Intrachain disulfides connect Cys367-Cys469, Cys414-Cys806, Cys567-Cys667, Cys569-Cys652, and Cys775-Cys785. Residue Asn411 is glycosylated (N-linked (GlcNAc...) asparagine). Position 475 (His475) interacts with Zn(2+). A 1-(9Z-octadecenoyl)-sn-glycero-3-phosphate-binding site is contributed by His475. Residue His475 coordinates 1-hexadecanoyl-sn-glycero-3-phosphate. A 1-tetradecanoyl-sn-glycerol 3-phosphate-binding site is contributed by His475. Residue Asn525 is glycosylated (N-linked (GlcNAc...) asparagine). Residues 598–863 (LYGRPAVLYR…TYLHTYESEI (266 aa)) form a nuclease-like domain region. 5 residues coordinate Ca(2+): Asp740, Asp742, Asp744, Leu746, and Asp748. Asn807 carries N-linked (GlcNAc...) asparagine glycosylation. The segment at 830 to 851 (IEHLTSLDFFRKTSRSYPEILT) is required for secretion.

It belongs to the nucleotide pyrophosphatase/phosphodiesterase family. Zn(2+) serves as cofactor. Ca(2+) is required as a cofactor. In terms of processing, N-glycosylation, but not furin-cleavage, plays a critical role on secretion and on lysoPLD activity. The interdomain disulfide bond between Cys-414 and Cys-806 is essential for catalytic activity. As to expression, detected in blood plasma (at protein level). Predominantly expressed in brain, placenta, ovary, and small intestine. Expressed in a number of carcinomas such as hepatocellular and prostate carcinoma, neuroblastoma and non-small-cell lung cancer. Expressed in body fluids such as plasma, cerebral spinal fluid (CSF), saliva, follicular and amniotic fluids. Not detected in leukocytes. Isoform 1 is more highly expressed in peripheral tissues than in the central nervous system (CNS). Adipocytes only express isoform 1. Isoform 3 is more highly expressed in the brain than in peripheral tissues.

Its subcellular location is the secreted. It catalyses the reaction a 1-O-alkyl-sn-glycero-3-phosphoethanolamine + H2O = a 1-O-alkyl-sn-glycero-3-phosphate + ethanolamine + H(+). It carries out the reaction a 1-acyl-sn-glycero-3-phosphoethanolamine + H2O = a 1-acyl-sn-glycero-3-phosphate + ethanolamine + H(+). The enzyme catalyses 1-(9Z-octadecenoyl)-sn-glycero-3-phosphoethanolamine + H2O = 1-(9Z-octadecenoyl)-sn-glycero-3-phosphate + ethanolamine + H(+). The catalysed reaction is a 1-O-alkyl-sn-glycero-3-phosphocholine + H2O = a 1-O-alkyl-sn-glycero-3-phosphate + choline + H(+). It catalyses the reaction 1-O-(9Z-octadecenyl)-sn-glycero-3-phosphocholine + H2O = 1-O-(9Z-octadecenyl)-sn-glycero-3-phosphate + choline + H(+). It carries out the reaction 1-O-hexadecyl-sn-glycero-3-phosphocholine + H2O = 1-O-hexadecyl-sn-glycero-3-phosphate + choline + H(+). The enzyme catalyses a 1-O-(1Z-alkenyl)-sn-glycero-3-phosphocholine + H2O = a 1-O-(1Z-alkenyl)-sn-glycero-3-phosphate + choline + H(+). The catalysed reaction is a 1-acyl-sn-glycero-3-phosphocholine + H2O = a 1-acyl-sn-glycero-3-phosphate + choline + H(+). It catalyses the reaction 1-dodecanoyl-sn-glycero-3-phosphocholine + H2O = 1-dodecanoyl-sn-glycerol 3-phosphate + choline + H(+). It carries out the reaction 1-(9Z-octadecenoyl)-sn-glycero-3-phosphocholine + H2O = 1-(9Z-octadecenoyl)-sn-glycero-3-phosphate + choline + H(+). The enzyme catalyses 1-tetradecanoyl-sn-glycero-3-phosphocholine + H2O = 1-tetradecanoyl-sn-glycerol 3-phosphate + choline + H(+). The catalysed reaction is 1-decanoyl-sn-glycero-3-phosphocholine + H2O = 1-decanoyl-sn-glycero-3-phosphate + choline + H(+). It catalyses the reaction 1-octadecanoyl-sn-glycero-3-phosphocholine + H2O = 1-octadecanoyl-sn-glycero-3-phosphate + choline + H(+). It carries out the reaction 1-hexadecanoyl-sn-glycero-3-phosphocholine + H2O = 1-hexadecanoyl-sn-glycero-3-phosphate + choline + H(+). The enzyme catalyses 1-hexanoyl-sn-glycero-3-phosphocholine + H2O = 1-hexanoyl-sn-glycero-3-phosphate + choline + H(+). The catalysed reaction is 1-(9Z,12Z)-octadecadienoyl-sn-glycero-3-phosphocholine + H2O = 1-(9Z,12Z)-octadecadienoyl-sn-glycero-3-phosphate + choline + H(+). It catalyses the reaction sphing-4-enine-phosphocholine + H2O = sphing-4-enine 1-phosphate + choline + H(+). It carries out the reaction 1-(5Z,8Z,11Z,14Z-eicosatetraenoyl)-sn-glycero-3-phosphocholine + H2O = 1-(5Z,8Z,11Z,14Z-eicosatetraenoyl)-sn-glycero-3-phosphate + choline + H(+). The enzyme catalyses a 2-acyl-sn-glycero-3-phosphocholine + H2O = a 2-acyl-sn-glycerol 3-phosphate + choline + H(+). The catalysed reaction is a 1,2-diacyl-sn-glycero-3-phosphocholine + H2O = a 1,2-diacyl-sn-glycero-3-phosphate + choline + H(+). It catalyses the reaction 1,2-dioctanoyl-sn-glycero-3-phosphocholine + H2O = 1,2-dioctanoyl-sn-glycero-3-phosphate + choline + H(+). It carries out the reaction 1,2-didecanoyl-sn-glycero-3-phosphocholine + H2O = 1,2-didecanoyl-sn-glycero-3-phosphate + choline + H(+). The enzyme catalyses a 1-acyl-sn-glycero-3-phospho-L-serine + H2O = a 1-acyl-sn-glycero-3-phosphate + L-serine + H(+). The catalysed reaction is 1-(9Z-octadecenoyl)-sn-glycero-3-phospho-L-serine + H2O = 1-(9Z-octadecenoyl)-sn-glycero-3-phosphate + L-serine + H(+). It catalyses the reaction a 2-acyl-sn-glycero-3-phospho-L-serine + H2O = a 2-acyl-sn-glycerol 3-phosphate + L-serine + H(+). Its activity is regulated as follows. Inhibited by lysophosphatidic acid (LPA) and sphingosine-1-phosphate (S1P). Inhibited by EDTA and EGTA. Secreted lysophospholipase D that hydrolyzes lysophospholipids to produce the signaling molecule lysophosphatidic acid (LPA) in extracellular fluids. Its major substrate is lysophosphatidylcholine. Can also act on sphingosylphosphorylcholine producing sphingosine-1-phosphate, a modulator of cell motility. Can hydrolyze, in vitro, bis-pNPP, to some extent pNP-TMP, and barely ATP. Involved in several motility-related processes such as angiogenesis and neurite outgrowth. Acts as an angiogenic factor by stimulating migration of smooth muscle cells and microtubule formation. Stimulates migration of melanoma cells, probably via a pertussis toxin-sensitive G protein. May have a role in induction of parturition. Possible involvement in cell proliferation and adipose tissue development. Required for LPA production in activated platelets, cleaves the sn-1 lysophospholipids to generate sn-1 lysophosphatidic acids containing predominantly 18:2 and 20:4 fatty acids. Shows a preference for the sn-1 to the sn-2 isomer of 1-O-alkyl-sn-glycero-3-phosphocholine (lyso-PAF). This chain is Autotaxin, found in Homo sapiens (Human).